A 203-amino-acid polypeptide reads, in one-letter code: Large ribosomal subunit protein bL25 (203 aa).

Positions 182–203 (EITEEPETEEKKEEGASSVSNS) are disordered.

Belongs to the bacterial ribosomal protein bL25 family. CTC subfamily. Part of the 50S ribosomal subunit; part of the 5S rRNA/L5/L18/L25 subcomplex. Contacts the 5S rRNA. Binds to the 5S rRNA independently of L5 and L18.

Its function is as follows. This is one of the proteins that binds to the 5S RNA in the ribosome where it forms part of the central protuberance. The protein is Large ribosomal subunit protein bL25 of Caldicellulosiruptor saccharolyticus (strain ATCC 43494 / DSM 8903 / Tp8T 6331).